The following is a 509-amino-acid chain: ATP synthase subunit alpha (509 aa).

Residue 169 to 176 coordinates ATP; that stretch reads GDRQTGKT.

It belongs to the ATPase alpha/beta chains family. F-type ATPases have 2 components, CF(1) - the catalytic core - and CF(0) - the membrane proton channel. CF(1) has five subunits: alpha(3), beta(3), gamma(1), delta(1), epsilon(1). CF(0) has three main subunits: a(1), b(2) and c(9-12). The alpha and beta chains form an alternating ring which encloses part of the gamma chain. CF(1) is attached to CF(0) by a central stalk formed by the gamma and epsilon chains, while a peripheral stalk is formed by the delta and b chains.

It is found in the cell inner membrane. It carries out the reaction ATP + H2O + 4 H(+)(in) = ADP + phosphate + 5 H(+)(out). Functionally, produces ATP from ADP in the presence of a proton gradient across the membrane. The alpha chain is a regulatory subunit. This is ATP synthase subunit alpha from Sinorhizobium fredii (strain NBRC 101917 / NGR234).